A 448-amino-acid chain; its full sequence is Phosphoglucosamine mutase (448 aa).

The active-site Phosphoserine intermediate is the serine 100. Positions 100, 240, 242, and 244 each coordinate Mg(2+). Phosphoserine is present on serine 100.

It belongs to the phosphohexose mutase family. Mg(2+) is required as a cofactor. Post-translationally, activated by phosphorylation.

The enzyme catalyses alpha-D-glucosamine 1-phosphate = D-glucosamine 6-phosphate. In terms of biological role, catalyzes the conversion of glucosamine-6-phosphate to glucosamine-1-phosphate. This chain is Phosphoglucosamine mutase, found in Bacillus cytotoxicus (strain DSM 22905 / CIP 110041 / 391-98 / NVH 391-98).